The chain runs to 433 residues: Dihydrolipoyllysine-residue acetyltransferase component of pyruvate dehydrogenase complex (433 aa).

Residues Ala-2 to Asp-77 form the Lipoyl-binding domain. Lys-43 is subject to N6-lipoyllysine. Disordered regions lie at residues Asp-80–Arg-134 and Tyr-164–Thr-204. 2 stretches are compositionally biased toward basic and acidic residues: residues Met-84–Glu-103 and Glu-117–Thr-126. Residues Lys-128 to Leu-165 form the Peripheral subunit-binding (PSBD) domain. The span at Asn-166–Val-188 shows a compositional bias: low complexity. The active site involves His-404.

It belongs to the 2-oxoacid dehydrogenase family. Forms a 24-polypeptide structural core with octahedral symmetry. The cofactor is (R)-lipoate.

It carries out the reaction N(6)-[(R)-dihydrolipoyl]-L-lysyl-[protein] + acetyl-CoA = N(6)-[(R)-S(8)-acetyldihydrolipoyl]-L-lysyl-[protein] + CoA. Functionally, the pyruvate dehydrogenase complex catalyzes the overall conversion of pyruvate to acetyl-CoA and CO(2). It contains multiple copies of three enzymatic components: pyruvate dehydrogenase (E1), dihydrolipoamide acetyltransferase (E2) and lipoamide dehydrogenase (E3). In Staphylococcus epidermidis (strain ATCC 12228 / FDA PCI 1200), this protein is Dihydrolipoyllysine-residue acetyltransferase component of pyruvate dehydrogenase complex (pdhC).